We begin with the raw amino-acid sequence, 200 residues long: ATP-dependent Clp protease proteolytic subunit (200 aa).

The active-site Nucleophile is the Ser-98. His-123 is an active-site residue.

The protein belongs to the peptidase S14 family. As to quaternary structure, fourteen ClpP subunits assemble into 2 heptameric rings which stack back to back to give a disk-like structure with a central cavity, resembling the structure of eukaryotic proteasomes.

The protein localises to the cytoplasm. It carries out the reaction Hydrolysis of proteins to small peptides in the presence of ATP and magnesium. alpha-casein is the usual test substrate. In the absence of ATP, only oligopeptides shorter than five residues are hydrolyzed (such as succinyl-Leu-Tyr-|-NHMec, and Leu-Tyr-Leu-|-Tyr-Trp, in which cleavage of the -Tyr-|-Leu- and -Tyr-|-Trp bonds also occurs).. In terms of biological role, cleaves peptides in various proteins in a process that requires ATP hydrolysis. Has a chymotrypsin-like activity. Plays a major role in the degradation of misfolded proteins. The protein is ATP-dependent Clp protease proteolytic subunit of Ehrlichia canis (strain Jake).